Consider the following 377-residue polypeptide: Cytochrome c peroxidase, mitochondrial (377 aa).

The N-terminal 32 residues, methionine 1–phenylalanine 32, are a transit peptide targeting the mitochondrion. The active-site Proton acceptor is histidine 138. Histidine 261 is a heme b binding site. Tryptophan 277 (tryptophan radical intermediate) is an active-site residue.

Belongs to the peroxidase family. Cytochrome c peroxidase subfamily. As to quaternary structure, forms a one-to-one complex with cytochrome c. Interacts with MID1 (via C-terminus); the interaction may contribute to cellular detoxification of radicals. Requires heme b as cofactor.

Its subcellular location is the mitochondrion matrix. The protein resides in the mitochondrion intermembrane space. The enzyme catalyses 2 Fe(II)-[cytochrome c] + H2O2 + 2 H(+) = 2 Fe(III)-[cytochrome c] + 2 H2O. In terms of biological role, destroys radicals which are normally produced within the cells and which are toxic to biological systems. The sequence is that of Cytochrome c peroxidase, mitochondrial (CCP1) from Cryptococcus neoformans var. grubii serotype A (strain H99 / ATCC 208821 / CBS 10515 / FGSC 9487) (Filobasidiella neoformans var. grubii).